A 454-amino-acid chain; its full sequence is UPF0210 protein EUBELI_01067 (454 aa).

This sequence belongs to the UPF0210 family. Homodimer.

This Lachnospira eligens (strain ATCC 27750 / DSM 3376 / VPI C15-48 / C15-B4) (Eubacterium eligens) protein is UPF0210 protein EUBELI_01067.